Reading from the N-terminus, the 374-residue chain is MYLQQLHLIQFRNYVAQQVEFSAPKTILVGPNAQGKSNLLEAVELLSTLKSHRVSRDRDLVKDGESLSQVTATLQRESGPLDLSLTLRANGRRTVSVNSETIRRQLDFLGHLNIVQFSSLDMDLVRGGPGERRNWLDAVLVQLEPVYAHLLQQYQQVLKQRNAYLKHHRADDAPQLDPQQLVLWNQQLAASGSRVIQRRQRMLMRLVPLAGHWHQTISGHQEQLEILYTPNVSYDPQFPEQLYPQFLSQLEEKSMLEQLQGLSLVGPHRDEVTLLINGTPARQYGSQGQQRTLVLALKLAELKLIEEVVGEAPLLLLDDVLAELDLNRQNQLLDAIQTRFQTLITTTHLGAFDAKWLDSAQILTVKAGQVQFST.

30–37 (GPNAQGKS) is a binding site for ATP.

Belongs to the RecF family.

It localises to the cytoplasm. Its function is as follows. The RecF protein is involved in DNA metabolism; it is required for DNA replication and normal SOS inducibility. RecF binds preferentially to single-stranded, linear DNA. It also seems to bind ATP. The polypeptide is DNA replication and repair protein RecF (Acaryochloris marina (strain MBIC 11017)).